The sequence spans 60 residues: Large ribosomal subunit protein uL30 (60 aa).

This sequence belongs to the universal ribosomal protein uL30 family. In terms of assembly, part of the 50S ribosomal subunit.

This Sphingopyxis alaskensis (strain DSM 13593 / LMG 18877 / RB2256) (Sphingomonas alaskensis) protein is Large ribosomal subunit protein uL30.